Consider the following 235-residue polypeptide: Phosphoribosylaminoimidazole-succinocarboxamide synthase (235 aa).

The protein belongs to the SAICAR synthetase family.

It carries out the reaction 5-amino-1-(5-phospho-D-ribosyl)imidazole-4-carboxylate + L-aspartate + ATP = (2S)-2-[5-amino-1-(5-phospho-beta-D-ribosyl)imidazole-4-carboxamido]succinate + ADP + phosphate + 2 H(+). The protein operates within purine metabolism; IMP biosynthesis via de novo pathway; 5-amino-1-(5-phospho-D-ribosyl)imidazole-4-carboxamide from 5-amino-1-(5-phospho-D-ribosyl)imidazole-4-carboxylate: step 1/2. In Thermoanaerobacter pseudethanolicus (strain ATCC 33223 / 39E) (Clostridium thermohydrosulfuricum), this protein is Phosphoribosylaminoimidazole-succinocarboxamide synthase.